Reading from the N-terminus, the 107-residue chain is Transcriptional regulator Rv3488 (107 aa).

Residues H16, E30, H34, and H101 each contribute to the Cd(2+) site.

As to quaternary structure, homodimer.

Its function is as follows. May have transcription regulation and metal-detoxifying functions through which it may enhance intracellular survival of mycobacteria. Binds to its own promoter region and to the Rv1999c promoter region. It displays strong affinity for cadmium ions, but can also bind zinc, manganese and nickel. Expression increases the intracellular survival of recombinant M.smegmatis in murine macrophage cell line and increases its tolerance to cadmium ions. The polypeptide is Transcriptional regulator Rv3488 (Mycobacterium tuberculosis (strain ATCC 25618 / H37Rv)).